The chain runs to 59 residues: Large ribosomal subunit protein uL30 (59 aa).

Belongs to the universal ribosomal protein uL30 family. In terms of assembly, part of the 50S ribosomal subunit.

The sequence is that of Large ribosomal subunit protein uL30 from Solidesulfovibrio magneticus (strain ATCC 700980 / DSM 13731 / RS-1) (Desulfovibrio magneticus).